A 657-amino-acid polypeptide reads, in one-letter code: 9-cis-epoxycarotenoid dioxygenase NCED9, chloroplastic (657 aa).

Fe cation is bound by residues His357, His406, His471, and His642.

The protein belongs to the carotenoid oxygenase family. Requires Fe(2+) as cofactor. As to expression, expressed in developing siliques, embryo and endosperm.

It localises to the plastid. Its subcellular location is the chloroplast stroma. It catalyses the reaction a 9-cis-epoxycarotenoid + O2 = a 12'-apo-carotenal + 2-cis,4-trans-xanthoxin. It carries out the reaction 9-cis-violaxanthin + O2 = (3S,5R,6S)-5,6-epoxy-3-hydroxy-5,6-dihydro-12'-apo-beta-caroten-12'-al + 2-cis,4-trans-xanthoxin. The catalysed reaction is 9'-cis-neoxanthin + O2 = (3S,5R,6R)-3,5-dihydroxy-6,7-didehydro-5,6-dihydro-12'-apo-beta-caroten-12'-al + 2-cis,4-trans-xanthoxin. In terms of biological role, has a 11,12(11',12') 9-cis epoxycarotenoid cleavage activity. Catalyzes the first step of abscisic-acid biosynthesis from carotenoids. Contributes probably to abscisic acid synthesis for the induction of seed dormancy. This is 9-cis-epoxycarotenoid dioxygenase NCED9, chloroplastic (NCED9) from Arabidopsis thaliana (Mouse-ear cress).